The chain runs to 100 residues: Apolipoprotein C-II (100 aa).

The first 25 residues, 1 to 25 (MDARSLLLLWLLLPLLLLLGCEVQG), serve as a signal peptide directing secretion. The tract at residues 65 to 73 (AVDETIRDI) is lipid binding. The segment at 77–100 (GSAAISTYTGILTDQILTMLQGKQ) is lipoprotein lipase cofactor.

This sequence belongs to the apolipoprotein C2 family. Post-translationally, proapolipoprotein C-II is synthesized as a sialic acid containing glycoprotein which is subsequently desialylated prior to its proteolytic processing. In terms of processing, proapolipoprotein C-II, the major form found in plasma undergoes proteolytic cleavage of its N-terminal hexapeptide to generate apolipoprotein C-II, which occurs as the minor form in plasma. In terms of tissue distribution, liver.

Its subcellular location is the secreted. In terms of biological role, component of chylomicrons, very low-density lipoproteins (VLDL), low-density lipoproteins (LDL), and high-density lipoproteins (HDL) in plasma. Plays an important role in lipoprotein metabolism as an activator of lipoprotein lipase. Both proapolipoprotein C-II and apolipoprotein C-II can activate lipoprotein lipase. The chain is Apolipoprotein C-II (APOC2) from Cavia porcellus (Guinea pig).